A 116-amino-acid chain; its full sequence is NADPH-dependent 7-cyano-7-deazaguanine reductase (116 aa).

Cys-31 functions as the Thioimide intermediate in the catalytic mechanism. Asp-38 functions as the Proton donor in the catalytic mechanism. Substrate-binding positions include 53–55 and 72–73; these read VEL and YE.

The protein belongs to the GTP cyclohydrolase I family. QueF type 1 subfamily.

The protein localises to the cytoplasm. The catalysed reaction is 7-aminomethyl-7-carbaguanine + 2 NADP(+) = 7-cyano-7-deazaguanine + 2 NADPH + 3 H(+). The protein operates within tRNA modification; tRNA-queuosine biosynthesis. In terms of biological role, catalyzes the NADPH-dependent reduction of 7-cyano-7-deazaguanine (preQ0) to 7-aminomethyl-7-deazaguanine (preQ1). In Chlorobium phaeobacteroides (strain DSM 266 / SMG 266 / 2430), this protein is NADPH-dependent 7-cyano-7-deazaguanine reductase.